Consider the following 353-residue polypeptide: DNA integrity scanning protein DisA (353 aa).

One can recognise a DAC domain in the interval 6–144 (DKELMNILKI…GGIKYVLRDS (139 aa)). ATP is bound by residues glycine 73, leucine 91, and 104-108 (TRHRT).

It belongs to the DisA family. In terms of assembly, homooctamer. The cofactor is Mg(2+).

The catalysed reaction is 2 ATP = 3',3'-c-di-AMP + 2 diphosphate. Functionally, participates in a DNA-damage check-point that is active prior to asymmetric division when DNA is damaged. DisA forms globular foci that rapidly scan along the chromosomes during sporulation, searching for lesions. When a lesion is present, DisA pauses at the lesion site. This triggers a cellular response that culminates in a temporary block in sporulation initiation. In terms of biological role, also has diadenylate cyclase activity, catalyzing the condensation of 2 ATP molecules into cyclic di-AMP (c-di-AMP). c-di-AMP acts as a signaling molecule that couples DNA integrity with progression of sporulation. The rise in c-di-AMP level generated by DisA while scanning the chromosome, operates as a positive signal that advances sporulation; upon encountering a lesion, the DisA focus arrests at the damaged site and halts c-di-AMP synthesis. This Clostridium botulinum (strain 657 / Type Ba4) protein is DNA integrity scanning protein DisA.